The primary structure comprises 239 residues: MIINAKGPASFAEKYIVRSIWDNKFPPGSILPAERELSELIGVTRTTLREVLQRLARDGWLKIQHGKPTQVNNFWETSGLNILETIADLNPEGFPVLVDQLLSARTNVSAIYFRGALRNNPDQAVDVLAGIHQLENTAEAFAEFDYQLHHRLAFSSGNPLYVLILNGFKGLYSRVGRYYFSSSDARALALNFYVELEKLALAKNYIDVPAVMRSYGINSGKMWQRLRDDMPADIAQDKS.

Positions 6–74 (KGPASFAEKY…HGKPTQVNNF (69 aa)) constitute an HTH gntR-type domain. The segment at residues 34–53 (ERELSELIGVTRTTLREVLQ) is a DNA-binding region (H-T-H motif).

Homodimer.

The protein resides in the cytoplasm. Functionally, multifunctional regulator of fatty acid metabolism. This chain is Fatty acid metabolism regulator protein, found in Shewanella denitrificans (strain OS217 / ATCC BAA-1090 / DSM 15013).